Consider the following 159-residue polypeptide: MNKKIFTLFLVVAASAIFAVSCNNKTTNPTSNSSEKKIVTEEDFKNAIEGLTYKTWAFTGKGKSFNFGSPITVEATSGSDSLAGVEKGFGNALKSALAAKGIDTGNITFDKGGASSSDKTSVSFKFTPKALGTSNFEEKLKSSVKEVEIKLTPKENWGA.

Residues 1 to 21 (MNKKIFTLFLVVAASAIFAVS) form the signal peptide. Cys-22 carries N-palmitoyl cysteine lipidation. Cys-22 carries the S-diacylglycerol cysteine lipid modification.

The protein localises to the cell outer membrane. The sequence is that of 16 kDa outer membrane lipoprotein (smpA) from Brachyspira hyodysenteriae (Treponema hyodysenteriae).